The chain runs to 70 residues: Bowman-Birk type proteinase inhibitor A7 (70 aa).

4 disulfides stabilise this stretch: Cys12–Cys31, Cys18–Cys29, Cys38–Cys45, and Cys42–Cys59.

The protein belongs to the Bowman-Birk serine protease inhibitor family. As to expression, expressed in bulb (at protein level).

Functionally, serine protease inhibitor. Strongly inhibits trypsin (Ki = 7.1 nM) and almost completely inhibits elastase. Also inhibits chymotrypsin (Ki = 19 nM). Does not inhibit bacterial subtilisin. The protein is Bowman-Birk type proteinase inhibitor A7 of Hyacinthus orientalis (Common hyacinth).